Reading from the N-terminus, the 492-residue chain is Uridine-cytidine kinase D (492 aa).

The segment at 36-56 (PLPKNKKDHDQSIESDSSFTR) is disordered. 117–124 (GPVGAGKT) is a binding site for ATP. In terms of domain architecture, CYTH spans 290-460 (EPVYVCKAKY…PQTFLYLYFK (171 aa)). A compositionally biased stretch (low complexity) spans 468 to 483 (PNYSKLKPNNTNSKIL). Residues 468-492 (PNYSKLKPNNTNSKILKNNKDKKNL) are disordered.

This sequence belongs to the uridine kinase family.

It carries out the reaction uridine + ATP = UMP + ADP + H(+). It catalyses the reaction cytidine + ATP = CMP + ADP + H(+). Its pathway is pyrimidine metabolism; CTP biosynthesis via salvage pathway; CTP from cytidine: step 1/3. It participates in pyrimidine metabolism; UMP biosynthesis via salvage pathway; UMP from uridine: step 1/1. In terms of biological role, catalyzes the conversion of uridine into uridine monophosphate and cytidine into cytidine monophosphate in the pyrimidine salvage pathway. This is Uridine-cytidine kinase D (udkD) from Dictyostelium discoideum (Social amoeba).